The following is a 346-amino-acid chain: 4-hydroxy-2-oxovalerate aldolase 2 (346 aa).

One can recognise a Pyruvate carboxyltransferase domain in the interval 8-260; it reads VTVHDMTLRD…ETGVDVFKIQ (253 aa). 16 to 17 contacts substrate; sequence RD. Asp17 lines the Mn(2+) pocket. His20 (proton acceptor) is an active-site residue. Positions 170 and 199 each coordinate substrate. Residues His199 and His201 each coordinate Mn(2+). A substrate-binding site is contributed by Tyr290.

The protein belongs to the 4-hydroxy-2-oxovalerate aldolase family.

It catalyses the reaction (S)-4-hydroxy-2-oxopentanoate = acetaldehyde + pyruvate. This chain is 4-hydroxy-2-oxovalerate aldolase 2 (bphX3), found in Metapseudomonas furukawaii (Pseudomonas furukawaii).